A 329-amino-acid chain; its full sequence is DNA-directed RNA polymerase subunit alpha (329 aa).

The interval 1–233 (MVREKVKVST…NLFIPFLHVE (233 aa)) is alpha N-terminal domain (alpha-NTD). The segment at 266-329 (TKELAFQYIF…KKILDILEKK (64 aa)) is alpha C-terminal domain (alpha-CTD).

Belongs to the RNA polymerase alpha chain family. In terms of assembly, in plastids the minimal PEP RNA polymerase catalytic core is composed of four subunits: alpha, beta, beta', and beta''. When a (nuclear-encoded) sigma factor is associated with the core the holoenzyme is formed, which can initiate transcription.

It localises to the plastid. It is found in the chloroplast. The catalysed reaction is RNA(n) + a ribonucleoside 5'-triphosphate = RNA(n+1) + diphosphate. In terms of biological role, DNA-dependent RNA polymerase catalyzes the transcription of DNA into RNA using the four ribonucleoside triphosphates as substrates. This Arabidopsis thaliana (Mouse-ear cress) protein is DNA-directed RNA polymerase subunit alpha.